We begin with the raw amino-acid sequence, 220 residues long: Glutathione S-transferase-like protein FUS3 (220 aa).

Residues 3–84 (SFGTLYTYMP…YVAQSGPQAS (82 aa)) form the GST N-terminal domain. Residues 90-220 (DAMSSAKIRQ…LIEKRRIGAK (131 aa)) form the GST C-terminal domain.

The protein belongs to the GST superfamily.

Its function is as follows. Glutathione S-transferase-like protein; part of the gene cluster that mediates the biosynthesis of the mycotoxin fusarin C. Within the cluster, FUS1, FUS2, FUS8 and FUS9 are sufficient for fusarin production. The other FUS cluster members are not essential for fusarin C biosynthesis. In Gibberella moniliformis (strain M3125 / FGSC 7600) (Maize ear and stalk rot fungus), this protein is Glutathione S-transferase-like protein FUS3.